The chain runs to 138 residues: Aspartate 1-decarboxylase (138 aa).

Catalysis depends on S25, which acts as the Schiff-base intermediate with substrate; via pyruvic acid. At S25 the chain carries Pyruvic acid (Ser). T57 contributes to the substrate binding site. The active-site Proton donor is the Y58. 73–75 is a substrate binding site; sequence GAA.

This sequence belongs to the PanD family. Heterooctamer of four alpha and four beta subunits. Requires pyruvate as cofactor. Post-translationally, is synthesized initially as an inactive proenzyme, which is activated by self-cleavage at a specific serine bond to produce a beta-subunit with a hydroxyl group at its C-terminus and an alpha-subunit with a pyruvoyl group at its N-terminus.

It localises to the cytoplasm. It carries out the reaction L-aspartate + H(+) = beta-alanine + CO2. It participates in cofactor biosynthesis; (R)-pantothenate biosynthesis; beta-alanine from L-aspartate: step 1/1. Functionally, catalyzes the pyruvoyl-dependent decarboxylation of aspartate to produce beta-alanine. This is Aspartate 1-decarboxylase from Renibacterium salmoninarum (strain ATCC 33209 / DSM 20767 / JCM 11484 / NBRC 15589 / NCIMB 2235).